A 527-amino-acid polypeptide reads, in one-letter code: Probable malate:quinone oxidoreductase (527 aa).

It belongs to the MQO family. The cofactor is FAD.

It carries out the reaction (S)-malate + a quinone = a quinol + oxaloacetate. It functions in the pathway carbohydrate metabolism; tricarboxylic acid cycle; oxaloacetate from (S)-malate (quinone route): step 1/1. The polypeptide is Probable malate:quinone oxidoreductase (Pectobacterium atrosepticum (strain SCRI 1043 / ATCC BAA-672) (Erwinia carotovora subsp. atroseptica)).